The sequence spans 585 residues: Arginine--tRNA ligase (585 aa).

Residues Ala-131–His-141 carry the 'HIGH' region motif.

The protein belongs to the class-I aminoacyl-tRNA synthetase family. In terms of assembly, monomer.

The protein resides in the cytoplasm. It carries out the reaction tRNA(Arg) + L-arginine + ATP = L-arginyl-tRNA(Arg) + AMP + diphosphate. The sequence is that of Arginine--tRNA ligase from Bartonella bacilliformis (strain ATCC 35685 / KC583 / Herrer 020/F12,63).